Here is a 635-residue protein sequence, read N- to C-terminus: Probable ethylene response sensor 2 (635 aa).

Helical transmembrane passes span 24–44 (ISDF…IYFV), 59–79 (FGAF…TFAI), and 94–114 (ATAV…PDLL). Residues C66 and H70 each coordinate Cu cation. In terms of domain architecture, GAF spans 159–308 (DRHTILRTTL…VVADQVAVAL (150 aa)). The Histidine kinase domain occupies 351–589 (VMNHEMRTPM…MFFVKLGMPE (239 aa)). H354 carries the post-translational modification Phosphohistidine; by autocatalysis.

The protein belongs to the ethylene receptor family. As to quaternary structure, homodimer. Cu cation is required as a cofactor. In terms of tissue distribution, expressed in anthers and hulls.

The protein resides in the endoplasmic reticulum membrane. It carries out the reaction ATP + protein L-histidine = ADP + protein N-phospho-L-histidine.. Ethylene receptor related to bacterial two-component regulators. Acts as a negative regulator of ethylene signaling. May play a role in the regulation of flowering by up-regulating GI (GIGANTEA) and RCN1 and regulate starch accumulation by down-regulating the alpha-amylase AMY3D. The sequence is that of Probable ethylene response sensor 2 from Oryza sativa subsp. indica (Rice).